The sequence spans 343 residues: Isopentenyl-diphosphate delta-isomerase (343 aa).

Substrate is bound at residue 9–10; sequence RK. Residues Ser-67, 68-70, Ser-98, and Asn-127 each bind FMN; that span reads AMT. 98–100 provides a ligand contact to substrate; the sequence is SQR. Residue Gln-162 participates in substrate binding. Glu-163 contacts Mg(2+). Residues Lys-194, Thr-224, 273-275, and 294-295 each bind FMN; these read GVR and AA.

Belongs to the IPP isomerase type 2 family. Homooctamer. Dimer of tetramers. It depends on FMN as a cofactor. The cofactor is NADPH. Requires Mg(2+) as cofactor.

The protein resides in the cytoplasm. The catalysed reaction is isopentenyl diphosphate = dimethylallyl diphosphate. Functionally, involved in the biosynthesis of isoprenoids. Catalyzes the 1,3-allylic rearrangement of the homoallylic substrate isopentenyl (IPP) to its allylic isomer, dimethylallyl diphosphate (DMAPP). This chain is Isopentenyl-diphosphate delta-isomerase, found in Xanthobacter autotrophicus (strain ATCC BAA-1158 / Py2).